The primary structure comprises 71 residues: General transcription factor IIH subunit 5 (71 aa).

Thr69 bears the Phosphothreonine mark.

It belongs to the TFB5 family. In terms of assembly, component of the 7-subunit TFIIH core complex composed of XPB/ERCC3, XPD/ERCC2, GTF2H1, GTF2H2, GTF2H3, GTF2H4 and GTF2H5, which is active in NER. The core complex associates with the 3-subunit CDK-activating kinase (CAK) module composed of CCNH/cyclin H, CDK7 and MNAT1 to form the 10-subunit holoenzyme (holo-TFIIH) active in transcription. Part of TBP-based Pol II pre-initiation complex (PIC), in which Pol II core assembles with general transcription factors and other specific initiation factors including GTF2E1, GTF2E2, GTF2F1, GTF2F2, TCEA1, ERCC2, ERCC3, GTF2H2, GTF2H3, GTF2H4, GTF2H5, GTF2A1, GTF2A2, GTF2B and TBP; this large multi-subunit PIC complex mediates DNA unwinding and targets Pol II core to the transcription start site where the first phosphodiester bond forms.

Its subcellular location is the nucleus. The protein localises to the cytoplasm. Its function is as follows. Component of the general transcription and DNA repair factor IIH (TFIIH) core complex, which is involved in general and transcription-coupled nucleotide excision repair (NER) of damaged DNA and, when complexed to CAK, in RNA transcription by RNA polymerase II. In NER, TFIIH acts by opening DNA around the lesion to allow the excision of the damaged oligonucleotide and its replacement by a new DNA fragment. In transcription, TFIIH has an essential role in transcription initiation. When the pre-initiation complex (PIC) has been established, TFIIH is required for promoter opening and promoter escape. Phosphorylation of the C-terminal tail (CTD) of the largest subunit of RNA polymerase II by the kinase module CAK controls the initiation of transcription. Necessary for the stability of the TFIIH complex and for the presence of normal levels of TFIIH in the cell. The protein is General transcription factor IIH subunit 5 of Mus musculus (Mouse).